Here is a 274-residue protein sequence, read N- to C-terminus: Protein RecA (274 aa).

43–50 provides a ligand contact to ATP; that stretch reads GPESSGKT.

It belongs to the RecA family.

The protein localises to the cytoplasm. Functionally, can catalyze the hydrolysis of ATP in the presence of single-stranded DNA, the ATP-dependent uptake of single-stranded DNA by duplex DNA, and the ATP-dependent hybridization of homologous single-stranded DNAs. It interacts with LexA causing its activation and leading to its autocatalytic cleavage. The protein is Protein RecA of Neisseria mucosa.